Reading from the N-terminus, the 685-residue chain is Translation initiation factor IF-2 (685 aa).

The 170-residue stretch at 185–354 folds into the tr-type G domain; that stretch reads KRPPVVTVMG…LLTAEMQELK (170 aa). Residues 194 to 201 form a G1 region; the sequence is GHVDHGKT. 194–201 is a GTP binding site; sequence GHVDHGKT. A G2 region spans residues 219–223; the sequence is GITQH. The G3 stretch occupies residues 240–243; it reads DTPG. Residues 240–244 and 294–297 contribute to the GTP site; these read DTPGH and NKMD. The interval 294–297 is G4; sequence NKMD. Residues 330 to 332 form a G5 region; it reads SAH.

It belongs to the TRAFAC class translation factor GTPase superfamily. Classic translation factor GTPase family. IF-2 subfamily.

The protein resides in the cytoplasm. Functionally, one of the essential components for the initiation of protein synthesis. Protects formylmethionyl-tRNA from spontaneous hydrolysis and promotes its binding to the 30S ribosomal subunits. Also involved in the hydrolysis of GTP during the formation of the 70S ribosomal complex. The polypeptide is Translation initiation factor IF-2 (Clostridium tetani (strain Massachusetts / E88)).